The primary structure comprises 312 residues: Dihydroorotate dehydrogenase B (NAD(+)), catalytic subunit (312 aa).

FMN-binding positions include serine 23 and 47–48 (KA). Substrate contacts are provided by residues lysine 47 and 71–75 (NAIGL). Asparagine 102 and asparagine 130 together coordinate FMN. Asparagine 130 serves as a coordination point for substrate. The active-site Nucleophile is the cysteine 133. Residues lysine 168 and isoleucine 194 each contribute to the FMN site. Residue 195–196 (NT) participates in substrate binding. Residues glycine 220, 246 to 247 (GG), and 268 to 269 (GT) contribute to the FMN site.

Belongs to the dihydroorotate dehydrogenase family. Type 1 subfamily. In terms of assembly, heterotetramer of 2 PyrK and 2 PyrD type B subunits. It depends on FMN as a cofactor.

The protein resides in the cytoplasm. The catalysed reaction is (S)-dihydroorotate + NAD(+) = orotate + NADH + H(+). The protein operates within pyrimidine metabolism; UMP biosynthesis via de novo pathway; orotate from (S)-dihydroorotate (NAD(+) route): step 1/1. Catalyzes the conversion of dihydroorotate to orotate with NAD(+) as electron acceptor. The chain is Dihydroorotate dehydrogenase B (NAD(+)), catalytic subunit (pyrDB) from Enterococcus faecalis (strain ATCC 700802 / V583).